Consider the following 199-residue polypeptide: Recombination protein RecR (199 aa).

The C4-type zinc-finger motif lies at 58 to 73 (CKICFNITDKEVCDIC). The region spanning 81 to 176 (STICVVSHPM…KVTRIAHGIP (96 aa)) is the Toprim domain.

This sequence belongs to the RecR family.

Its function is as follows. May play a role in DNA repair. It seems to be involved in an RecBC-independent recombinational process of DNA repair. It may act with RecF and RecO. In Caldanaerobacter subterraneus subsp. tengcongensis (strain DSM 15242 / JCM 11007 / NBRC 100824 / MB4) (Thermoanaerobacter tengcongensis), this protein is Recombination protein RecR.